The primary structure comprises 436 residues: MKRKRIDIITLGCSKNLVDSEQLMRQLEEAGYSVTHDTENPEGEIAVINTCGFIGDAKEESINMILEFAERKEEGDLKKLFVMGCLSERYLQELAIEIPQVDKFYGKFNWKELLQDLGKTYHEELYIERTLTTPKHYAYLKISEGCDRKCSYCAIPIITGRHISKSMEEILDEVRYLVSQGVKEFQVIAQELTYYGVDLYKKQMLPELIERISEIPGVEWIRLHYAYPAHFPTDLFRVMRERDNVCKYMDIALQHISDNMLKLMRRQVSKEDTYKLIEQFRKEVPGIHLRTTLMVGHPGETEEDFEELKEFVRKARFDRMGAFAYSEEEGTYAAQQYEDSIPQEVKQARLDELMDIQQGISAELSAAKIGQQMKVIIDRIEGDYYIGRTEFDSPEVDPEVLISVSREELEVGQFYQVEVTDADDFDLYAKILNKYE.

The region spanning 4 to 122 is the MTTase N-terminal domain; it reads KRIDIITLGC…LLQDLGKTYH (119 aa). [4Fe-4S] cluster is bound by residues Cys-13, Cys-51, Cys-85, Cys-146, Cys-150, and Cys-153. In terms of domain architecture, Radical SAM core spans 132-363; that stretch reads TTPKHYAYLK…MDIQQGISAE (232 aa). In terms of domain architecture, TRAM spans 366 to 433; the sequence is AAKIGQQMKV…DFDLYAKILN (68 aa).

Belongs to the methylthiotransferase family. RimO subfamily. The cofactor is [4Fe-4S] cluster.

The protein localises to the cytoplasm. It catalyses the reaction L-aspartate(89)-[ribosomal protein uS12]-hydrogen + (sulfur carrier)-SH + AH2 + 2 S-adenosyl-L-methionine = 3-methylsulfanyl-L-aspartate(89)-[ribosomal protein uS12]-hydrogen + (sulfur carrier)-H + 5'-deoxyadenosine + L-methionine + A + S-adenosyl-L-homocysteine + 2 H(+). Its function is as follows. Catalyzes the methylthiolation of an aspartic acid residue of ribosomal protein uS12. The chain is Ribosomal protein uS12 methylthiotransferase RimO from Bacteroides thetaiotaomicron (strain ATCC 29148 / DSM 2079 / JCM 5827 / CCUG 10774 / NCTC 10582 / VPI-5482 / E50).